The chain runs to 214 residues: Outer membrane lipoprotein MapA (214 aa).

The first 17 residues, 1 to 17 (MFKKFLIFIVPILFLSA), serve as a signal peptide directing secretion. A lipid anchor (N-palmitoyl cysteine) is attached at C18. A lipid anchor (S-diacylglycerol cysteine) is attached at C18.

It is found in the cell outer membrane. This Campylobacter jejuni subsp. jejuni serotype O:6 (strain 81116 / NCTC 11828) protein is Outer membrane lipoprotein MapA (mapA).